Here is a 343-residue protein sequence, read N- to C-terminus: Replication initiation protein (343 aa).

The interval glutamate 42–asparagine 61 is disordered.

Its function is as follows. Probably functions as an initiator for the IncI1 ColIb-P9 replicon. This Escherichia coli protein is Replication initiation protein (repZ).